Here is a 1097-residue protein sequence, read N- to C-terminus: DNA-directed RNA polymerase subunit beta (1097 aa).

The disordered stretch occupies residues 1072–1097 (QDVNPRRSTPSRPTYESLGVADYDED).

Belongs to the RNA polymerase beta chain family. As to quaternary structure, in cyanobacteria the RNAP catalytic core is composed of 2 alpha, 1 beta, 1 beta', 1 gamma and 1 omega subunit. When a sigma factor is associated with the core the holoenzyme is formed, which can initiate transcription.

It carries out the reaction RNA(n) + a ribonucleoside 5'-triphosphate = RNA(n+1) + diphosphate. In terms of biological role, DNA-dependent RNA polymerase catalyzes the transcription of DNA into RNA using the four ribonucleoside triphosphates as substrates. The sequence is that of DNA-directed RNA polymerase subunit beta from Synechococcus sp. (strain CC9605).